A 169-amino-acid chain; its full sequence is 3-hydroxyanthranilate 3,4-dioxygenase (169 aa).

An O2-binding site is contributed by Arg-44. Fe cation contacts are provided by His-48, Glu-54, and His-92. A substrate-binding site is contributed by Glu-54. Residues Arg-96 and Glu-106 each coordinate substrate. A divalent metal cation contacts are provided by Cys-121, Cys-124, Cys-158, and Cys-160.

This sequence belongs to the 3-HAO family. The cofactor is Fe(2+).

The protein resides in the cytoplasm. The enzyme catalyses 3-hydroxyanthranilate + O2 = (2Z,4Z)-2-amino-3-carboxymuconate 6-semialdehyde. It functions in the pathway cofactor biosynthesis; NAD(+) biosynthesis; quinolinate from L-kynurenine: step 3/3. Its function is as follows. Catalyzes the oxidative ring opening of 3-hydroxyanthranilate to 2-amino-3-carboxymuconate semialdehyde, which spontaneously cyclizes to quinolinate. The chain is 3-hydroxyanthranilate 3,4-dioxygenase from Meyerozyma guilliermondii (strain ATCC 6260 / CBS 566 / DSM 6381 / JCM 1539 / NBRC 10279 / NRRL Y-324) (Yeast).